Consider the following 2785-residue polypeptide: MTYFFIYVSTERACSLNNCTIAKRIGKGKDATVIFEHFRKPVDPFVQENCPCKALNSEMGPFSSDTSSSYGNVQNGNNSVLEAYNRQTENSSNLRDASQVYTHNSGFSFIPTGNTASGNGDLFSVTYLRSILSSISAAFPSHNNTGSSTVITSKLIKDPRLMKREQSMRNKSDTAGLSDVLPLDKSLGCGDSQIKLTCMPTSSISSSEVPADNTITSCLNASCFKFSSESSHYQAHNSSSKGHDCIASSSIAVTEQFKEQHSSSFPSSLSNAFSDVRKQKHSEEQVQRAQMRSNVPVLTALSSESRNSDESENTCSNDSQGHFSQESPSSDINSIYKVGHQMSTVFPAQKKGNLCEYIQDTGMMRASISTEDSTKDGVNHTWCKETVLSNETVSSPIDNSNTLYQEHKEGGNLNSLSGNCEKIGVTHKLQVPKFPISSTGDKNELYRAALELECSLTPTIECLSQKYPQHSLEHEDNTNFAMTQGLIELKTVQNNQNFGNILSDAFQEAKDVPLASEKLIDRVISSAAIDISLDSSVCNIIGEYTCVRRENENGEASPYNCHKEEASRVKDGVQDHSLSYDAELSCDLNLKINLQEQRDDKNPNEAKEHNTDNINGSEKQDCLANDHFTNIVEMREIKSNTEVEILNSEECFTFNSFRGKNGKPAETASSESEAVEQRHAPNDQRGLEHLVSSFPEIEGSSVCVASNATKQIVGTTVLTVSTSLGDHQKDELKEICSSESSDLGLVKHSISECEIDTDKDKLQDFHQLVNENSALKTGLGSEIEVDLEHDNASVFQQNMHSQGNDLCEEFELYESLKSRIDWEGLFGSSYEEIESSSFARREGTDQHSSTECNCVSFCSQDKRELHNPIFLPDLQVTITNLLSLRISPTDESLELKDNFYKQVTESTEPETNKEGNASGFGMCSQPSGENSSFSCANKFGNSVQESGDVSKSESSHSSNSSHNTHVDQGSGKPNNDSLSTEPSNVTVMNDKSKCPTKSKPVFNDTRNKKDMQSRSSKRTLHASSSRGQNIANKDLREHETHEKKRRPTSHGSSDRFSSLSQGRIKTFSQSEKHIRNVLNILNNEASLCKSKHLSRKLNKAVLHLKKAHRRVHTSLQLISKVGQKRKGPLPKAYAVIHNNFWESCDHQGDSLMSERRYSKHFLSKRKYDKQGDKRFLRFDIEESLTPVSKHRLYRTNRERIAECLSNEVMSGHVSSSLTTFHVREFCDEEQFPEPQLPLAYTSQSISQLEYTNSIVGNESSSELEHFSETSGNMLDPKETLTEKEYQTHTQLCNSDSAKLKNHTTHSIRDIAKECNSEDKTVLCESNPVYLSFIKENTSHSPDKSYDSNCKANTDIHISVLGSKKKHILSVDIYEQDNCVSDGVKSGEAIFPIEKCTVPMETTSSIPTENIASKSYTIPPVSSILVTAGEEESSVGENGLFDVNENEMNITMHSKLDLTSVTEESKICKKNMKNLSCNDSSMLLKENITGPSKRYMAKYIEEEKIRKIEQAVYKKIITEGSPISFKYKSQNKILKEKSFHVNKKIITNNLTDSHLSIKNSTVDTIALKDIPNQLKERKEAGQIKVNNNSHSDCLSKPAIVETNHRPVLHGNPKVATLQKELKEHRSPNYTSHVTELSQILQRADEAASLQILEEETKLCQNILPLFVQAFERQQECSIDQILISRKLLVEQNLWNNCRLKLKPCAVDTWVELQMAMETIQFIENKKRFLEGKPTFRSLLWYDESLYSELLRRPRGYQLQSNFYPGFQGRLKYNAFCELQNYHNQLVEFLTETKKENNSYYALLKYKRQINECEAIMKHYSDCFDFCLSVPFACGVNFGDSLGDLETLRKSTLKLISVPGGSPKVHSYPGKKDHLWIIIEIVSSKVSFIKSNEEISIKICLYGLEHIYFDAAKSLVWKEKSCSLPKKHSEKNREMEEINERAFSKLKKIYDVLSKGLNNEPTSIGLQEDAIIASKQSTLGSISNCRLNKAWLSYPDISCVGEILDQAKSADLEELQGLTLRCTDHLEILKKYFQMLQEDNIDNIFIMEENVLDMLSNHNLGAVILKPEAIEIYIEIVMISETIHYLKNLIAKKLHNQRFRGMLWFDWSLLPELIGCQEEVVSLSVGDTQTHCLWKLVETAISVLKKELAVIYEYGEASNCSYALHLFYRELKELTGVKRLLNNSKYSVSTYIDLVPHTASVNFGNTVAELEHNYKQFFLLLKNVMSVPQKDFGKMVHIIKVMKTIEHMKLLSAKDTKLSTHLLFLQMLRNKRNALQQNRQEKMETPVTEPGEDSSQPGVSEQTPPGTECTVKNISDSSKKRPVTADTCEVSQGKGNTDTVPSWKKQKVTMKDVGNIQTVSKHPSTTGSPPNDENKIGSNSSDSLKSISASPEVVKRQSSVLGSVSPAESVQDTCTPKSESKVEPTDSLPDSLASLTEQQENSNVIEKRNGNSSVAETNDKKDCPLVTCDQKDIDASYSPDHTPAQESHKTPVDHTQISPSNLTAGNDDPLVPDASLLSVSASQSEKDVYLSGTDFHHENNKILNLSTEDCTGTSSPEPVCIKDKISVLQVDKTQPIKSESPKKSMTDAPNPNTAPFGSYGNSALNVNGTVQHTHSEQNSKVLTQKVGTSRNIPPQSACSPVHNSSAHSFGTSYPYYSWCFYQYSSSNGTAVTHTYQGMTAYEIQQPPPPVLTTVASTVQSTHFNRSYSEHFSYFPGQPQANSFNPGNGYFPSHTPVSYNYQQPVYSQFASHQPVPQATYPYPPNPGAPPQVPWTYAPWQQNPFLRRP.

Over residues 262 to 274 (SSSFPSSLSNAFS) the composition is skewed to low complexity. Disordered regions lie at residues 262 to 331 (SSSF…PSSD), 596 to 620 (EQRD…SEKQ), 661 to 683 (NGKP…APND), 904 to 924 (TEST…GMCS), 943 to 1064 (VQES…QGRI), 2276 to 2458 (NRQE…TNDK), 2470 to 2511 (DIDA…LVPD), and 2571 to 2601 (TQPI…GNSA). Residues 275 to 286 (DVRKQKHSEEQV) show a composition bias toward basic and acidic residues. A compositionally biased stretch (polar residues) spans 314–331 (TCSNDSQGHFSQESPSSD). A compositionally biased stretch (basic and acidic residues) spans 596 to 611 (EQRDDKNPNEAKEHNT). Composition is skewed to polar residues over residues 962–989 (HNTH…TVMN) and 1021–1031 (HASSSRGQNIA). A compositionally biased stretch (basic and acidic residues) spans 1033–1042 (KDLREHETHE). Composition is skewed to polar residues over residues 1049-1064 (SHGS…QGRI), 2291-2314 (DSSQ…NISD), 2327-2338 (EVSQGKGNTDTV), 2353-2387 (NIQT…SISA), 2394-2415 (RQSS…CTPK), 2431-2454 (ASLT…SVAE), 2491-2502 (DHTQISPSNLTA), and 2585-2601 (DAPN…GNSA).

This sequence belongs to the TEX15 family. In terms of assembly, interacts with PIWIL4. Interacts with PIWIL2. In terms of tissue distribution, detected in testis and ovary, and at lower levels in lung and brain.

The protein localises to the cytoplasm. The protein resides in the nucleus. In terms of biological role, required during spermatogenesis for normal chromosome synapsis and meiotic recombination in germ cells. Necessary for formation of DMC1 and RAD51 foci on meiotic chromosomes, suggesting a specific role in DNA double-stranded break repair. Essential executor of PIWIL4-piRNA pathway directed transposon DNA methylation and silencing in the male embryonic germ cells. PIWIL4-piRNA binds to nascent transposon transcripts and interacts with TEX15, which may in turn recruit the epigenetic silencing machinery to the transposon loci. Not required for piRNA biosynthesis. This chain is Testis-expressed protein 15, found in Mus musculus (Mouse).